Reading from the N-terminus, the 363-residue chain is Protein-glutamate methylesterase/protein-glutamine glutaminase 3 (363 aa).

Residues 8–125 (KVLCVDDSAL…RDGMLDYAEK (118 aa)) form the Response regulatory domain. A 4-aspartylphosphate modification is found at Asp59. One can recognise a CheB-type methylesterase domain in the interval 164 to 356 (LVSTEKLIII…RRVMARLATM (193 aa)). Residues Ser176, His202, and Asp298 contribute to the active site.

It belongs to the CheB family. Phosphorylated by CheA. Phosphorylation of the N-terminal regulatory domain activates the methylesterase activity.

It localises to the cytoplasm. It carries out the reaction [protein]-L-glutamate 5-O-methyl ester + H2O = L-glutamyl-[protein] + methanol + H(+). The catalysed reaction is L-glutaminyl-[protein] + H2O = L-glutamyl-[protein] + NH4(+). Functionally, involved in chemotaxis. Part of a chemotaxis signal transduction system that modulates chemotaxis in response to various stimuli. Catalyzes the demethylation of specific methylglutamate residues introduced into the chemoreceptors (methyl-accepting chemotaxis proteins or MCP) by CheR. Also mediates the irreversible deamidation of specific glutamine residues to glutamic acid. This chain is Protein-glutamate methylesterase/protein-glutamine glutaminase 3, found in Burkholderia lata (strain ATCC 17760 / DSM 23089 / LMG 22485 / NCIMB 9086 / R18194 / 383).